The primary structure comprises 68 residues: uncharacterized protein (68 aa).

This is an uncharacterized protein from Salmonella typhi.